The sequence spans 273 residues: Bis(5'-nucleosyl)-tetraphosphatase, symmetrical (273 aa).

Belongs to the Ap4A hydrolase family.

The catalysed reaction is P(1),P(4)-bis(5'-adenosyl) tetraphosphate + H2O = 2 ADP + 2 H(+). Hydrolyzes diadenosine 5',5'''-P1,P4-tetraphosphate to yield ADP. This is Bis(5'-nucleosyl)-tetraphosphatase, symmetrical from Histophilus somni (strain 2336) (Haemophilus somnus).